The following is a 704-amino-acid chain: Elongation factor G (704 aa).

Positions 8–290 (ARYRNIGISA…AVIDYLPSPV (283 aa)) constitute a tr-type G domain. Residues 17 to 24 (AHIDAGKT), 88 to 92 (DTPGH), and 142 to 145 (NKMD) each bind GTP. N6-acetyllysine occurs at positions 504 and 643.

The protein belongs to the TRAFAC class translation factor GTPase superfamily. Classic translation factor GTPase family. EF-G/EF-2 subfamily.

The protein resides in the cytoplasm. Catalyzes the GTP-dependent ribosomal translocation step during translation elongation. During this step, the ribosome changes from the pre-translocational (PRE) to the post-translocational (POST) state as the newly formed A-site-bound peptidyl-tRNA and P-site-bound deacylated tRNA move to the P and E sites, respectively. Catalyzes the coordinated movement of the two tRNA molecules, the mRNA and conformational changes in the ribosome. The protein is Elongation factor G of Shigella flexneri.